Consider the following 116-residue polypeptide: Large ribosomal subunit protein uL24 (116 aa).

Belongs to the universal ribosomal protein uL24 family. In terms of assembly, part of the 50S ribosomal subunit.

Functionally, one of two assembly initiator proteins, it binds directly to the 5'-end of the 23S rRNA, where it nucleates assembly of the 50S subunit. One of the proteins that surrounds the polypeptide exit tunnel on the outside of the subunit. The chain is Large ribosomal subunit protein uL24 from Protochlamydia amoebophila (strain UWE25).